The primary structure comprises 222 residues: N-(5'-phosphoribosyl)anthranilate isomerase (222 aa).

This sequence belongs to the TrpF family.

It carries out the reaction N-(5-phospho-beta-D-ribosyl)anthranilate = 1-(2-carboxyphenylamino)-1-deoxy-D-ribulose 5-phosphate. Its pathway is amino-acid biosynthesis; L-tryptophan biosynthesis; L-tryptophan from chorismate: step 3/5. The chain is N-(5'-phosphoribosyl)anthranilate isomerase from Brevibacillus brevis (strain 47 / JCM 6285 / NBRC 100599).